The following is a 487-amino-acid chain: ATP synthase subunit beta (487 aa).

Residue 164–171 coordinates ATP; sequence GGAGVGKT.

This sequence belongs to the ATPase alpha/beta chains family. As to quaternary structure, F-type ATPases have 2 components, CF(1) - the catalytic core - and CF(0) - the membrane proton channel. CF(1) has five subunits: alpha(3), beta(3), gamma(1), delta(1), epsilon(1). CF(0) has four main subunits: a(1), b(1), b'(1) and c(9-12).

The protein resides in the cellular thylakoid membrane. It carries out the reaction ATP + H2O + 4 H(+)(in) = ADP + phosphate + 5 H(+)(out). Functionally, produces ATP from ADP in the presence of a proton gradient across the membrane. The catalytic sites are hosted primarily by the beta subunits. The protein is ATP synthase subunit beta of Synechococcus sp. (strain CC9311).